A 72-amino-acid polypeptide reads, in one-letter code: uncharacterized protein (72 aa).

The interval 1–53 (MTNEPSTSTPTSTSTSTSTSTSTSTTTLTSTSSTPTSTSTSTSTSTSTSTSTS) is disordered.

This is an uncharacterized protein from Dictyostelium discoideum (Social amoeba).